We begin with the raw amino-acid sequence, 69 residues long: Proteinase inhibitor (69 aa).

Serine 1 is modified (N-acetylserine). A disulfide bond links cysteine 4 and cysteine 49.

Functionally, in vitro, strong inhibitor of bovine beta-trypsin, weak inhibitor of alpha-chymotrypsin, subtilisin BPN', subtilisin Carlsberg and cathepsin G. The polypeptide is Proteinase inhibitor (Linum usitatissimum (Flax)).